Consider the following 561-residue polypeptide: 2-methylisocitrate lyase, mitochondrial (561 aa).

The tract at residues 154 to 177 is disordered; it reads KAQSMHDRKQWDTRRKMSPDERSK. Residues 157 to 177 show a composition bias toward basic and acidic residues; it reads SMHDRKQWDTRRKMSPDERSK. Cys228 is a catalytic residue.

This sequence belongs to the isocitrate lyase/PEP mutase superfamily. Isocitrate lyase family. Mg(2+) is required as a cofactor.

It is found in the mitochondrion matrix. The enzyme catalyses (2S,3R)-3-hydroxybutane-1,2,3-tricarboxylate = pyruvate + succinate. It participates in organic acid metabolism; propanoate degradation. In terms of biological role, component of the methylcitrate cycle that catalyzes the formation of pyruvate and succinate from 2-methylisocitrate during the metabolism of endogenous propionyl-CoA. Plays an important role for growth and development, but also in antagonism, root colonization and induction of defense responses in plants. This is 2-methylisocitrate lyase, mitochondrial from Hypocrea atroviridis (strain ATCC 20476 / IMI 206040) (Trichoderma atroviride).